The chain runs to 261 residues: Cytochrome c oxidase subunit 3 (261 aa).

The Mitochondrial matrix segment spans residues 1–15; the sequence is MTHQTHAYHMVNPSP. Residues 16 to 34 form a helical membrane-spanning segment; the sequence is WPLTGALSALLMTSGLTMW. Residues 35–40 lie on the Mitochondrial intermembrane side of the membrane; sequence FHYNST. A helical transmembrane segment spans residues 41 to 66; it reads ILLMLGLTTNMLTMYQWWRDIIREST. At 67-72 the chain is on the mitochondrial matrix side; that stretch reads FQGHHT. The chain crosses the membrane as a helical span at residues 73–105; it reads PTVQKGLRYGMILFIISEVLFFTGFFWAFYHSS. At 106–128 the chain is on the mitochondrial intermembrane side; the sequence is LAPTPELGGCWPPTGIHPLNPLE. A helical transmembrane segment spans residues 129 to 152; the sequence is VPLLNTSVLLASGVSITWAHHSLM. The Mitochondrial matrix segment spans residues 153–155; it reads EGD. A helical transmembrane segment spans residues 156 to 183; sequence RNHMLQALFITIALGIYFTLLQASEYYE. The Mitochondrial intermembrane segment spans residues 184–190; it reads APFTISD. The helical transmembrane segment at 191-223 threads the bilayer; that stretch reads GVYGSTFFVATGFHGLHVIIGSTFLIVCFFRQL. Over 224-232 the chain is Mitochondrial matrix; sequence KFHFTSSHH. A helical membrane pass occupies residues 233-256; that stretch reads FGFEAAAWYWHFVDVVWLFLYVSI. Topologically, residues 257–261 are mitochondrial intermembrane; sequence YWWGS.

The protein belongs to the cytochrome c oxidase subunit 3 family. In terms of assembly, component of the cytochrome c oxidase (complex IV, CIV), a multisubunit enzyme composed of 14 subunits. The complex is composed of a catalytic core of 3 subunits MT-CO1, MT-CO2 and MT-CO3, encoded in the mitochondrial DNA, and 11 supernumerary subunits COX4I, COX5A, COX5B, COX6A, COX6B, COX6C, COX7A, COX7B, COX7C, COX8 and NDUFA4, which are encoded in the nuclear genome. The complex exists as a monomer or a dimer and forms supercomplexes (SCs) in the inner mitochondrial membrane with NADH-ubiquinone oxidoreductase (complex I, CI) and ubiquinol-cytochrome c oxidoreductase (cytochrome b-c1 complex, complex III, CIII), resulting in different assemblies (supercomplex SCI(1)III(2)IV(1) and megacomplex MCI(2)III(2)IV(2)).

It localises to the mitochondrion inner membrane. The catalysed reaction is 4 Fe(II)-[cytochrome c] + O2 + 8 H(+)(in) = 4 Fe(III)-[cytochrome c] + 2 H2O + 4 H(+)(out). Functionally, component of the cytochrome c oxidase, the last enzyme in the mitochondrial electron transport chain which drives oxidative phosphorylation. The respiratory chain contains 3 multisubunit complexes succinate dehydrogenase (complex II, CII), ubiquinol-cytochrome c oxidoreductase (cytochrome b-c1 complex, complex III, CIII) and cytochrome c oxidase (complex IV, CIV), that cooperate to transfer electrons derived from NADH and succinate to molecular oxygen, creating an electrochemical gradient over the inner membrane that drives transmembrane transport and the ATP synthase. Cytochrome c oxidase is the component of the respiratory chain that catalyzes the reduction of oxygen to water. Electrons originating from reduced cytochrome c in the intermembrane space (IMS) are transferred via the dinuclear copper A center (CU(A)) of subunit 2 and heme A of subunit 1 to the active site in subunit 1, a binuclear center (BNC) formed by heme A3 and copper B (CU(B)). The BNC reduces molecular oxygen to 2 water molecules using 4 electrons from cytochrome c in the IMS and 4 protons from the mitochondrial matrix. The polypeptide is Cytochrome c oxidase subunit 3 (MT-CO3) (Tragelaphus imberbis (Lesser kudu)).